A 179-amino-acid polypeptide reads, in one-letter code: Large ribosomal subunit protein uL6 (179 aa).

The protein belongs to the universal ribosomal protein uL6 family. In terms of assembly, part of the 50S ribosomal subunit.

Functionally, this protein binds to the 23S rRNA, and is important in its secondary structure. It is located near the subunit interface in the base of the L7/L12 stalk, and near the tRNA binding site of the peptidyltransferase center. The protein is Large ribosomal subunit protein uL6 of Synechococcus sp. (strain WH7803).